Consider the following 112-residue polypeptide: Ferredoxin, plant-type (112 aa).

One can recognise a 2Fe-2S ferredoxin-type domain in the interval 6 to 97 (YEVFEVLSGQ…DLTIEYFRHV (92 aa)). [2Fe-2S] cluster is bound by residues cysteine 41, cysteine 46, cysteine 49, and cysteine 81.

Belongs to the 2Fe2S plant-type ferredoxin family.

Its pathway is aromatic compound metabolism; catechol degradation. Functionally, ferredoxins are iron-sulfur proteins that transfer electrons in a wide variety of metabolic reactions. The sequence is that of Ferredoxin, plant-type (xylT) from Pseudomonas putida (Arthrobacter siderocapsulatus).